The following is a 59-amino-acid chain: Large ribosomal subunit protein bL32 (59 aa).

The disordered stretch occupies residues 1–21 (MAVPKKKSSKSKGRSRAAHHA).

Belongs to the bacterial ribosomal protein bL32 family.

This Magnetococcus marinus (strain ATCC BAA-1437 / JCM 17883 / MC-1) protein is Large ribosomal subunit protein bL32.